Consider the following 209-residue polypeptide: Uracil phosphoribosyltransferase (209 aa).

Residues arginine 79, arginine 104, and 131–139 (DPMLATGNS) contribute to the 5-phospho-alpha-D-ribose 1-diphosphate site. Uracil is bound by residues isoleucine 194 and 199-201 (GDA). Aspartate 200 is a 5-phospho-alpha-D-ribose 1-diphosphate binding site.

The protein belongs to the UPRTase family. Mg(2+) serves as cofactor.

The enzyme catalyses UMP + diphosphate = 5-phospho-alpha-D-ribose 1-diphosphate + uracil. Its pathway is pyrimidine metabolism; UMP biosynthesis via salvage pathway; UMP from uracil: step 1/1. With respect to regulation, allosterically activated by GTP. In terms of biological role, catalyzes the conversion of uracil and 5-phospho-alpha-D-ribose 1-diphosphate (PRPP) to UMP and diphosphate. The protein is Uracil phosphoribosyltransferase of Rhizobium etli (strain CIAT 652).